The primary structure comprises 420 residues: MKTLIARHKAGEHIGICSVCSAHPLVIEAALAFDRNSTRKVLIEATSNQVNQFGGYTGMTPADFREFVFAIADKVGFARERIILGGDHLGPNCWQQENADAAMEKSVELVKAYVRAGFSKIHLDASMSCADDSIPLAPETVAERAAVLCLAAESVATDCQREQLNYVIGTEVPVPGGEASAIQSVHITQVEDAANTLRTHQKAFIARGLAEALTRVIAIVVQPGVEFDHSNIIHYQAQXAQALAQWIEKTKMVYEAHSTDYQTQXAYRELVRDHFAILKVGPALTFALREAIFALAQIEQELIAPENRSRCLAVIEEVMLDEPQYWKKYYRTGFNDSLLDIRYSLSDRIRYYWPHSRIKNSVETMMVNLEGVDIPLGMISQYLPKQFERIQSGELSAIPHQLIMDKIYDVLRAYRYGCAE.

Belongs to the GatZ/KbaZ family. GatZ subfamily. Forms a complex with GatY.

Its pathway is carbohydrate metabolism; D-tagatose 6-phosphate degradation; D-glyceraldehyde 3-phosphate and glycerone phosphate from D-tagatose 6-phosphate: step 2/2. Functionally, component of the tagatose-1,6-bisphosphate aldolase GatYZ that is required for full activity and stability of the Y subunit. Could have a chaperone-like function for the proper and stable folding of GatY. When expressed alone, GatZ does not show any aldolase activity. Is involved in the catabolism of galactitol. This Escherichia coli O6:H1 (strain CFT073 / ATCC 700928 / UPEC) protein is D-tagatose-1,6-bisphosphate aldolase subunit GatZ.